A 199-amino-acid polypeptide reads, in one-letter code: MAKVLVLYYSAYGHIETMANAVAEGAREAGATVDIKRVPELVPPDVAKASYYKLDQAAPVATIDDLANYDAIIVGTGTRFGRMASQMANFLDQAGGLWAKGALNGKVGGAFTSTATQHGGQETTLFSIITNLLHFGMVVVGLNYGFQGQMTLGEITGGAPYGATTLTGGDGARQPSANELAGARYQGKTIAETAIKLHG.

The 187-residue stretch at 4–190 (VLVLYYSAYG…AGARYQGKTI (187 aa)) folds into the Flavodoxin-like domain. Residues 10–15 (SAYGHI) and 78–80 (TRF) contribute to the FMN site. Tyr-12 serves as a coordination point for NAD(+). Trp-98 lines the substrate pocket. FMN is bound by residues 113 to 119 (STATQHG) and His-134.

This sequence belongs to the WrbA family. FMN is required as a cofactor.

It carries out the reaction a quinone + NADH + H(+) = a quinol + NAD(+). The catalysed reaction is a quinone + NADPH + H(+) = a quinol + NADP(+). The sequence is that of NAD(P)H dehydrogenase (quinone) from Rhodopseudomonas palustris (strain HaA2).